Here is a 256-residue protein sequence, read N- to C-terminus: Imidazole glycerol phosphate synthase subunit HisF (256 aa).

Active-site residues include D11 and D130.

This sequence belongs to the HisA/HisF family. Heterodimer of HisH and HisF.

It is found in the cytoplasm. The enzyme catalyses 5-[(5-phospho-1-deoxy-D-ribulos-1-ylimino)methylamino]-1-(5-phospho-beta-D-ribosyl)imidazole-4-carboxamide + L-glutamine = D-erythro-1-(imidazol-4-yl)glycerol 3-phosphate + 5-amino-1-(5-phospho-beta-D-ribosyl)imidazole-4-carboxamide + L-glutamate + H(+). Its pathway is amino-acid biosynthesis; L-histidine biosynthesis; L-histidine from 5-phospho-alpha-D-ribose 1-diphosphate: step 5/9. Functionally, IGPS catalyzes the conversion of PRFAR and glutamine to IGP, AICAR and glutamate. The HisF subunit catalyzes the cyclization activity that produces IGP and AICAR from PRFAR using the ammonia provided by the HisH subunit. The chain is Imidazole glycerol phosphate synthase subunit HisF from Thioalkalivibrio sulfidiphilus (strain HL-EbGR7).